A 160-amino-acid chain; its full sequence is SsrA-binding protein (160 aa).

Residues 131–160 (KKEYDKRDTEKARDSDREIQRAIRSKGKED) form a disordered region.

The protein belongs to the SmpB family.

It localises to the cytoplasm. Required for rescue of stalled ribosomes mediated by trans-translation. Binds to transfer-messenger RNA (tmRNA), required for stable association of tmRNA with ribosomes. tmRNA and SmpB together mimic tRNA shape, replacing the anticodon stem-loop with SmpB. tmRNA is encoded by the ssrA gene; the 2 termini fold to resemble tRNA(Ala) and it encodes a 'tag peptide', a short internal open reading frame. During trans-translation Ala-aminoacylated tmRNA acts like a tRNA, entering the A-site of stalled ribosomes, displacing the stalled mRNA. The ribosome then switches to translate the ORF on the tmRNA; the nascent peptide is terminated with the 'tag peptide' encoded by the tmRNA and targeted for degradation. The ribosome is freed to recommence translation, which seems to be the essential function of trans-translation. The protein is SsrA-binding protein of Azotobacter vinelandii (strain DJ / ATCC BAA-1303).